A 349-amino-acid polypeptide reads, in one-letter code: Peptide chain release factor 1 (349 aa).

Gln233 is modified (N5-methylglutamine).

Belongs to the prokaryotic/mitochondrial release factor family. In terms of processing, methylated by PrmC. Methylation increases the termination efficiency of RF1.

Its subcellular location is the cytoplasm. Peptide chain release factor 1 directs the termination of translation in response to the peptide chain termination codons UAG and UAA. This is Peptide chain release factor 1 from Pelotomaculum thermopropionicum (strain DSM 13744 / JCM 10971 / SI).